Here is a 998-residue protein sequence, read N- to C-terminus: MIVTPLKHSGIHLSSGTLQRRNMPLDAVFIDSIPSGTLTPLKDLVKYQKSSLKVNGHKKNQLLEIRTSNNKDLFQSTMLSEATLPNSSLDISVIKPSMDRLRNEMIYESPGKIFQRMKAKVQRDKQEQLTRSSSMLGSPQGEHTKDFPPNTDKKAQLQQTYICEEKQTSVQSNDPSLGDPPILNQEQKNVSASCISKKALTRAQFGGQVLHSKESPVRITVSKKNTFVLGGIDCTYEKFENTDVNTISSLCVPIKNHSQSITSDNDVTTERTAKEDITEPNEEMMSRRTILQDPIKNTSKIKRSSPRPNLTLSGRSQRKCTKLETVVKEVKKYQAVHLQEWMIKVINNNTAICVEGKLVDMTDVYWHSNVIIERIKHNELRTLSGNIYILKGLIDSVSMKEAGYPCYLTRKFMFGFPHNWKEHIDKFLEQLRAEKKNKTRQETARVQEKQKSKKKDAEDKETYVLQKASITYDLNDNSLERTEVPTDPLNSLEQPTSGKERRHPLLSQKRAYVLITPLRNKKLIEQRCIDYSLSIEGISDFFKAKHQEESDSDIHGTPSSTSKSQETFEHRVGFEGNTKEDCNECDIITARHIQIPCPKSKQMLTNDFMKKNKLPSKLQKTENQIGVSQYCRSSSHLSSEENEVEIKSRTRARNTKERLNRERENTNHITKDILLISETEGERACYITPKRPRSCYITPKRPRSSAKESHYKSAVSKDFLTEGKASDRTSRQLLDHLPGLTDDEEWSEQELQKLHCAFTSLPKHKPGFWSDVAMAVGSRTADECQKKYTEEPQGQGSRKHGSKKKQANKVQNGEKDSADAKTIKITAKVGTLKRKRQMRDCLEHLAKDNHDDFFTATPLQKQRIQLPSFQYSQDDDFLLDMDRDPASPSSIITSPLRSTTPQCQHFSPSMLAAIERNNCDRYVYQMQKNAKKYGKSNGGLVWGNIRKKTVKTDLSSPPPTRKALFNKDLGKNTDISKYFIDDTESDEEEKDYYFSNSD.

Lysine 7 is covalently cross-linked (Glycyl lysine isopeptide (Lys-Gly) (interchain with G-Cter in SUMO2)). Serine 9, serine 109, and serine 134 each carry phosphoserine. The disordered stretch occupies residues 122–153 (QRDKQEQLTRSSSMLGSPQGEHTKDFPPNTDK). Positions 142 to 153 (EHTKDFPPNTDK) are enriched in basic and acidic residues. Serine 169 and serine 258 each carry phosphoserine. Residues 336–422 (VHLQEWMIKV…MFGFPHNWKE (87 aa)) enclose the SANTA domain. Disordered stretches follow at residues 438 to 460 (KTRQETARVQEKQKSKKKDAEDK) and 476 to 502 (DNSLERTEVPTDPLNSLEQPTSGKERR). The span at 488–497 (PLNSLEQPTS) shows a compositional bias: polar residues. Phosphothreonine is present on residues threonine 516 and threonine 578. Phosphoserine is present on residues serine 638 and serine 639. The segment at 638-660 (SSEENEVEIKSRTRARNTKERLN) is disordered. The span at 644-660 (VEIKSRTRARNTKERLN) shows a compositional bias: basic and acidic residues. Threonine 688 bears the Phosphothreonine mark. Lysine 707 is covalently cross-linked (Glycyl lysine isopeptide (Lys-Gly) (interchain with G-Cter in SUMO2)). Position 726 is a phosphoserine (serine 726). The SANT domain maps to 741–796 (TDDEEWSEQELQKLHCAFTSLPKHKPGFWSDVAMAVGSRTADECQKKYTEEPQGQG). Lysine 765 participates in a covalent cross-link: Glycyl lysine isopeptide (Lys-Gly) (interchain with G-Cter in SUMO2). The segment at 784–821 (CQKKYTEEPQGQGSRKHGSKKKQANKVQNGEKDSADAK) is disordered. Positions 797–807 (SRKHGSKKKQA) are enriched in basic residues. The segment covering 812 to 821 (NGEKDSADAK) has biased composition (basic and acidic residues). Glycyl lysine isopeptide (Lys-Gly) (interchain with G-Cter in SUMO2) cross-links involve residues lysine 821, lysine 828, and lysine 847. Serine 872 carries the phosphoserine modification. A Glycyl lysine isopeptide (Lys-Gly) (interchain with G-Cter in SUMO2) cross-link involves residue lysine 948. Residues serine 955 and serine 985 each carry the phosphoserine modification. The segment at 976 to 998 (SKYFIDDTESDEEEKDYYFSNSD) is disordered. Over residues 981-990 (DDTESDEEEK) the composition is skewed to acidic residues.

As to quaternary structure, interacts with SP1. Interacts with MIS18A. Identified in a complex containing MIS18A, OIP5/MIS18B, MIS18BP1, RBBP7 and RBBP4. Interacts with KAT7/HBO1. Interacts (via N-terminus) with FLNA (via N-terminus).

Its subcellular location is the nucleus. The protein localises to the chromosome. It is found in the centromere. Required for recruitment of CENPA to centromeres and normal chromosome segregation during mitosis. The sequence is that of Mis18-binding protein 1 (Mis18bp1) from Mus musculus (Mouse).